Consider the following 404-residue polypeptide: Cysteine desulfurase IscS (404 aa).

Pyridoxal 5'-phosphate-binding positions include 73–74, asparagine 153, glutamine 181, and 201–203; these read AT and SAH. At lysine 204 the chain carries N6-(pyridoxal phosphate)lysine. Threonine 241 lines the pyridoxal 5'-phosphate pocket. Catalysis depends on cysteine 327, which acts as the Cysteine persulfide intermediate. Residue cysteine 327 coordinates [2Fe-2S] cluster.

It belongs to the class-V pyridoxal-phosphate-dependent aminotransferase family. NifS/IscS subfamily. Homodimer. Forms a heterotetramer with IscU, interacts with other sulfur acceptors. Pyridoxal 5'-phosphate serves as cofactor.

The protein resides in the cytoplasm. The enzyme catalyses (sulfur carrier)-H + L-cysteine = (sulfur carrier)-SH + L-alanine. It participates in cofactor biosynthesis; iron-sulfur cluster biosynthesis. In terms of biological role, master enzyme that delivers sulfur to a number of partners involved in Fe-S cluster assembly, tRNA modification or cofactor biosynthesis. Catalyzes the removal of elemental sulfur atoms from cysteine to produce alanine. Functions as a sulfur delivery protein for Fe-S cluster synthesis onto IscU, an Fe-S scaffold assembly protein, as well as other S acceptor proteins. The polypeptide is Cysteine desulfurase IscS (Anaeromyxobacter sp. (strain Fw109-5)).